The primary structure comprises 799 residues: Target of rapamycin complex 1 subunit TCO89 (799 aa).

Positions 18–41 (NASTVSHQSKPFRQFSTRSRAKSN) are disordered. Phosphothreonine occurs at positions 52 and 82. Residues Ser-84, Ser-104, Ser-107, Ser-115, and Ser-144 each carry the phosphoserine modification. Over residues 97–126 (NQGKRSASFHSPVHNTLLSPKNSSHSNTGT) the composition is skewed to polar residues. Disordered stretches follow at residues 97 to 171 (NQGK…DNIE) and 201 to 284 (LQSP…ADID). Positions 147-156 (DAQESKKSES) are enriched in basic and acidic residues. Acidic residues predominate over residues 157–170 (TTDEEVECFSEDNI). Ser-203 and Ser-215 each carry phosphoserine. The segment covering 213 to 224 (DKSGTDGKENHR) has biased composition (basic and acidic residues). Over residues 233–243 (LSSNNYFGESS) the composition is skewed to polar residues. Residues 244 to 253 (HSIEHQKDGE) show a composition bias toward basic and acidic residues. Residues 254-269 (TSPSSIETKLNATSVI) are compositionally biased toward polar residues. Ser-290 is modified (phosphoserine). Positions 324–391 (AHKSNQKPSH…PDDISSAGTK (68 aa)) are disordered. Positions 332 to 346 (SHSDEQFDQEDHIDA) are enriched in basic and acidic residues. Positions 348–363 (RSNSSRKSDSSFMSLR) are enriched in low complexity. Ser-397 carries the phosphoserine modification. Disordered stretches follow at residues 418–476 (FENS…QSTF) and 538–568 (NKNS…RQSN). Polar residues-rich tracts occupy residues 420–429 (NSSSIQNSLG) and 461–476 (GRSQ…QSTF). Phosphoserine is present on Ser-575. The segment at 663–685 (IRKKSHNDAQSIAHSSSDTDHKD) is disordered. Position 707 is a phosphoserine (Ser-707).

Belongs to the TORC subunit TCO89 family. As to quaternary structure, the target of rapamycin complex 1 (TORC1) is composed of at least KOG1, LST8, TCO89 and either TOR1 (TORC1-A) or TOR2 (TORC1-B). Interacts with PIB2; following activation of PIB2 by glutamine or cysteine. TORC1 binds to and is inhibited by FKBP-rapamycin.

Its subcellular location is the cell membrane. It localises to the vacuole membrane. Component of TORC1, which regulates multiple cellular processes to control cell growth in response to environmental signals. Nutrient limitation and environmental stress signals cause inactivation of TORC1. Active TORC1 positively controls ribosome biogenesis via control of rRNA, ribosomal protein and tRNA gene expression, and rRNA processing. TORC1 positively controls protein biosynthesis by regulation of mRNA stability, translation initiation factor activity, and high-affinity amino acid permeases that serve to provide amino acids for use by the translation machinery. TORC1 also promotes growth by sequestering a number of nutrient and general stress-responsive transcription factors in the cytoplasm. TORC1 negatively controls macroautophagy, a process to recycle surplus cytoplasmic mass under nutrient starvation conditions. The chain is Target of rapamycin complex 1 subunit TCO89 (TCO89) from Saccharomyces cerevisiae (strain ATCC 204508 / S288c) (Baker's yeast).